We begin with the raw amino-acid sequence, 420 residues long: Mannose-1-phosphate guanylyltransferase regulatory subunit alpha (420 aa).

The interval 2–251 is substrate-binding domain; sequence LKAVILIGGP…DGIWSQIKSA (250 aa). GDP-alpha-D-mannose is bound by residues Glu-85 and Gln-247. The interval 273 to 420 is hexapeptide repeat domain; it reads LAKHTPGGPW…SRSFTNQIIL (148 aa). The C-loop stretch occupies residues 356–384; it reads TPSDPNPNDPRARMDSESLFKDGKLLPAI.

Belongs to the transferase hexapeptide repeat family. As to quaternary structure, component of the GMPPA-GMPPB mannose-1-phosphate guanylyltransferase complex composed of 4 GMPPA subunits and 8 GMPPB subunits; the complex is organized into three layers, a central layer made up of 2 GMPPA dimers sandwiched between two layers each made up of 2 GMPPB dimers. In terms of tissue distribution, expressed in fibroblasts (at protein level).

Its subcellular location is the cytoplasm. Its function is as follows. Regulatory subunit of the GMPPA-GMPPB mannose-1-phosphate guanylyltransferase complex; reduces the catalytic activity of GMPPB when part of the complex. Mediates allosteric feedback inhibition of GMPPB catalytic activity upon binding GDP-alpha-D-mannose. Together with GMPPB regulates GDP-alpha-D-mannose levels. This is Mannose-1-phosphate guanylyltransferase regulatory subunit alpha from Homo sapiens (Human).